The following is a 236-amino-acid chain: Leucyl/phenylalanyl-tRNA--protein transferase (236 aa).

The protein belongs to the L/F-transferase family.

It is found in the cytoplasm. The catalysed reaction is N-terminal L-lysyl-[protein] + L-leucyl-tRNA(Leu) = N-terminal L-leucyl-L-lysyl-[protein] + tRNA(Leu) + H(+). It carries out the reaction N-terminal L-arginyl-[protein] + L-leucyl-tRNA(Leu) = N-terminal L-leucyl-L-arginyl-[protein] + tRNA(Leu) + H(+). The enzyme catalyses L-phenylalanyl-tRNA(Phe) + an N-terminal L-alpha-aminoacyl-[protein] = an N-terminal L-phenylalanyl-L-alpha-aminoacyl-[protein] + tRNA(Phe). In terms of biological role, functions in the N-end rule pathway of protein degradation where it conjugates Leu, Phe and, less efficiently, Met from aminoacyl-tRNAs to the N-termini of proteins containing an N-terminal arginine or lysine. This is Leucyl/phenylalanyl-tRNA--protein transferase from Vibrio campbellii (strain ATCC BAA-1116).